Here is a 308-residue protein sequence, read N- to C-terminus: Aspartate carbamoyltransferase catalytic subunit (308 aa).

Carbamoyl phosphate-binding residues include arginine 49 and threonine 50. Lysine 77 provides a ligand contact to L-aspartate. The carbamoyl phosphate site is built by arginine 99, histidine 127, and glutamine 130. The L-aspartate site is built by arginine 160 and arginine 211. Carbamoyl phosphate contacts are provided by alanine 252 and proline 253.

It belongs to the aspartate/ornithine carbamoyltransferase superfamily. ATCase family. Heterododecamer (2C3:3R2) of six catalytic PyrB chains organized as two trimers (C3), and six regulatory PyrI chains organized as three dimers (R2).

It carries out the reaction carbamoyl phosphate + L-aspartate = N-carbamoyl-L-aspartate + phosphate + H(+). Its pathway is pyrimidine metabolism; UMP biosynthesis via de novo pathway; (S)-dihydroorotate from bicarbonate: step 2/3. Catalyzes the condensation of carbamoyl phosphate and aspartate to form carbamoyl aspartate and inorganic phosphate, the committed step in the de novo pyrimidine nucleotide biosynthesis pathway. The protein is Aspartate carbamoyltransferase catalytic subunit of Geobacillus kaustophilus (strain HTA426).